A 132-amino-acid chain; its full sequence is Small ribosomal subunit protein uS11 (132 aa).

Over residues 1–16 (MAAGMKGKRSRRRKER) the composition is skewed to basic residues. Positions 1-20 (MAAGMKGKRSRRRKERKNVE) are disordered.

The protein belongs to the universal ribosomal protein uS11 family. In terms of assembly, part of the 30S ribosomal subunit. Interacts with proteins S7 and S18. Binds to IF-3.

Located on the platform of the 30S subunit, it bridges several disparate RNA helices of the 16S rRNA. Forms part of the Shine-Dalgarno cleft in the 70S ribosome. The protein is Small ribosomal subunit protein uS11 of Clostridium botulinum (strain Loch Maree / Type A3).